A 257-amino-acid chain; its full sequence is Type III pantothenate kinase (257 aa).

An ATP-binding site is contributed by 5–12 (DIGNTNIK). 107-110 (GSDR) is a substrate binding site. The Proton acceptor role is filled by Asp-109. Residue Thr-133 participates in ATP binding.

Belongs to the type III pantothenate kinase family. As to quaternary structure, homodimer. Requires NH4(+) as cofactor. The cofactor is K(+).

It localises to the cytoplasm. The catalysed reaction is (R)-pantothenate + ATP = (R)-4'-phosphopantothenate + ADP + H(+). It functions in the pathway cofactor biosynthesis; coenzyme A biosynthesis; CoA from (R)-pantothenate: step 1/5. Catalyzes the phosphorylation of pantothenate (Pan), the first step in CoA biosynthesis. This Ehrlichia ruminantium (strain Gardel) protein is Type III pantothenate kinase.